Consider the following 166-residue polypeptide: Disulfide bond formation protein B (166 aa).

Residues Met-1 to Gly-10 are Cytoplasmic-facing. The chain crosses the membrane as a helical span at residues Phe-11–Phe-27. The Periplasmic portion of the chain corresponds to Ala-28–Ile-45. Cys-37 and Cys-40 are oxidised to a cystine. The chain crosses the membrane as a helical span at residues Gly-46–Pro-62. At Gly-63–Val-69 the chain is on the cytoplasmic side. Residues Trp-70–Leu-86 form a helical membrane-spanning segment. At Arg-87–Phe-143 the chain is on the periplasmic side. Cys-102 and Cys-129 are joined by a disulfide. The chain crosses the membrane as a helical span at residues Trp-144–Arg-162. The Cytoplasmic portion of the chain corresponds to Arg-163 to Gly-166.

Belongs to the DsbB family.

It localises to the cell inner membrane. Functionally, required for disulfide bond formation in some periplasmic proteins. Acts by oxidizing the DsbA protein. This chain is Disulfide bond formation protein B, found in Chromobacterium violaceum (strain ATCC 12472 / DSM 30191 / JCM 1249 / CCUG 213 / NBRC 12614 / NCIMB 9131 / NCTC 9757 / MK).